The primary structure comprises 255 residues: BPI fold-containing family A member 1 (255 aa).

Residues 1-19 (MFHIGSLVVLCGLLAPTTA) form the signal peptide. Residues 87–92 (LLGSLL) are important for surfactant activity and antibacterial properties. 3 N-linked (GlcNAc...) asparagine glycosylation sites follow: N157, N178, and N205. C179 and C223 are joined by a disulfide.

This sequence belongs to the BPI/LBP/Plunc superfamily. Plunc family. As to quaternary structure, monomer. Interacts (via N-terminus) with SCNN1B, a subunit of the heterotrimeric epithelial sodium channel (ENaC); this inhibits proteolytic activation of ENaC. As to expression, expressed in trachea, and at lower levels in nasal epithelium.

The protein resides in the secreted. In terms of biological role, lipid-binding protein which shows high specificity for the surfactant phospholipid dipalmitoylphosphatidylcholine (DPPC). Plays a role in the innate immune responses of the upper airways. Reduces the surface tension in secretions from airway epithelia and inhibits the formation of biofilm by pathogenic Gram-negative bacteria, such as P.aeruginosa and K.pneumoniae. Negatively regulates proteolytic cleavage of SCNN1G, an event that is required for activation of the epithelial sodium channel (ENaC), and thereby contributes to airway surface liquid homeostasis and proper clearance of mucus. Plays a role in the airway inflammatory response after exposure to irritants. May attract macrophages and neutrophils. The polypeptide is BPI fold-containing family A member 1 (BPIFA1) (Bos taurus (Bovine)).